The following is a 385-amino-acid chain: MNVKEPAEEAAIQLRTERQRIEPEGEEQSEQPTDLRGLFPEEIAALLTPWGQPTFRGKQIFKWLQNRAVREVAEMTDLPQALRVRLGEAGWLKPLAPERHRVARDGTEKYLWRLADGELIESVLMPYRRAQTRDRVTVCLSTQAGCPLSCRFCATGRQGFRRNLTAAEIVGQVLDITHEKRKDDPDFKVTNLVFMGMGEPFLNYDNVRRAIGLFTHPEGQAIGQRRITVSTAGIVPGIDRFADEDWEVNLALSLHAADDKQRSEWMPVNDRFPLAQVLEACRRYWEKTRRRLSVEYALMAGVNDRLEDARRLASLFKGWPIHLNLIPVNAVAGIGVRRPEREPTERFLAELRRWGVDAVIREERGQDIEAACGQLRGAAKGEEEA.

Residues 1–35 form a disordered region; the sequence is MNVKEPAEEAAIQLRTERQRIEPEGEEQSEQPTDL. The active-site Proton acceptor is Glu-121. The Radical SAM core domain maps to 132–367; that stretch reads TRDRVTVCLS…AVIREERGQD (236 aa). An intrachain disulfide couples Cys-139 to Cys-372. Residues Cys-146, Cys-150, and Cys-153 each contribute to the [4Fe-4S] cluster site. Residues 198-199, Ser-230, 253-255, and Asn-329 each bind S-adenosyl-L-methionine; these read GE and SLH. Cys-372 (S-methylcysteine intermediate) is an active-site residue.

Belongs to the radical SAM superfamily. RlmN family. [4Fe-4S] cluster serves as cofactor.

The protein localises to the cytoplasm. It carries out the reaction adenosine(2503) in 23S rRNA + 2 reduced [2Fe-2S]-[ferredoxin] + 2 S-adenosyl-L-methionine = 2-methyladenosine(2503) in 23S rRNA + 5'-deoxyadenosine + L-methionine + 2 oxidized [2Fe-2S]-[ferredoxin] + S-adenosyl-L-homocysteine. The enzyme catalyses adenosine(37) in tRNA + 2 reduced [2Fe-2S]-[ferredoxin] + 2 S-adenosyl-L-methionine = 2-methyladenosine(37) in tRNA + 5'-deoxyadenosine + L-methionine + 2 oxidized [2Fe-2S]-[ferredoxin] + S-adenosyl-L-homocysteine. Functionally, specifically methylates position 2 of adenine 2503 in 23S rRNA and position 2 of adenine 37 in tRNAs. The polypeptide is Probable dual-specificity RNA methyltransferase RlmN (Heliobacterium modesticaldum (strain ATCC 51547 / Ice1)).